Here is a 93-residue protein sequence, read N- to C-terminus: Small ribosomal subunit protein uS19 (93 aa).

Belongs to the universal ribosomal protein uS19 family.

Its function is as follows. Protein S19 forms a complex with S13 that binds strongly to the 16S ribosomal RNA. This Maridesulfovibrio salexigens (strain ATCC 14822 / DSM 2638 / NCIMB 8403 / VKM B-1763) (Desulfovibrio salexigens) protein is Small ribosomal subunit protein uS19.